Reading from the N-terminus, the 218-residue chain is Small ribosomal subunit protein uS7m (218 aa).

Residues 1-19 (MSLLGRIAEKTSRLSCLRL) constitute a mitochondrion transit peptide.

It belongs to the universal ribosomal protein uS7 family. As to quaternary structure, component of the mitochondrial ribosome small subunit (28S) which comprises a 12S rRNA and about 30 distinct proteins.

It is found in the mitochondrion. The sequence is that of Small ribosomal subunit protein uS7m (mRpS7) from Drosophila melanogaster (Fruit fly).